Reading from the N-terminus, the 91-residue chain is Putative regulatory protein Cyan7425_4125 (91 aa).

It belongs to the RemA family.

The polypeptide is Putative regulatory protein Cyan7425_4125 (Cyanothece sp. (strain PCC 7425 / ATCC 29141)).